A 333-amino-acid chain; its full sequence is MTQIKVDAIISKQFLAADLNEIRQMQEESKKQVIKMEIVWKNVALFVALHIGALVGLYQLVFQAKWATVGWVFLLHTLGSMGVTGGAHRLWAHRAYKATLSWRVFLMLINSIAFQNDIIDWARDHRCHHKWTDTDADPHSTNRGMFFAHMGWLLVKKHDQLKIQGGKLDLSDLYEDPVLMFQRKNYLPLVGIFCFALPTFIPVVLWGESAFIAFYTAALFRYCFTLHATWCINSVSHWVGWQPYDHQASSVDNLWTSIAAVGEGGHNYHHTFPQDYRTSEHAEFLNWTRVLIDFGASIGMVYDRKTTPEEVIQRQCKKFGCETEREKMLHKLG.

4 helical membrane-spanning segments follow: residues 42–62 (NVAL…QLVF), 66–86 (WATV…VTGG), 187–207 (LPLV…VLWG), and 210–230 (AFIA…HATW).

This sequence belongs to the fatty acid desaturase type 1 family. As to expression, expressed in the intestine in adult worms and in all four larval stages. Additional expression in the pharynx and tail cells after hatching and throughout the lifespan.

It localises to the membrane. The catalysed reaction is hexadecanoyl-CoA + 2 Fe(II)-[cytochrome b5] + O2 + 2 H(+) = (9Z)-hexadecenoyl-CoA + 2 Fe(III)-[cytochrome b5] + 2 H2O. The enzyme catalyses tetradecanoyl-CoA + 2 Fe(II)-[cytochrome b5] + O2 + 2 H(+) = (9Z)-tetradecenoyl-CoA + 2 Fe(III)-[cytochrome b5] + 2 H2O. It carries out the reaction heptadecanoyl-CoA + 2 Fe(II)-[cytochrome b5] + O2 + 2 H(+) = (9Z)-heptadecenoyl-CoA + 2 Fe(III)-[cytochrome b5] + 2 H2O. It catalyses the reaction pentadecanoyl-CoA + 2 Fe(II)-[cytochrome b5] + O2 + 2 H(+) = (9Z)-pentadecenoyl-CoA + 2 Fe(III)-[cytochrome b5] + 2 H2O. The protein operates within lipid metabolism; monounsaturated fatty acid biosynthesis. Functionally, delta(9)-fatty acid desaturase that acts preferentially on palmitoyl-CoA (hexadecanoyl-CoA) producing the monounsaturated palmitoleoyl-CoA ((9Z)-hexadecenoyl-CoA), which can be elongated to (11Z)-octadecenoyl-CoA (the most abundant monounsaturated fatty acid in Caenorhabditis elegans phospholipids and triacylglycerols). Also acts on pentadecanoyl-CoA, heptadecanoyl-CoA and myristoyl-CoA (tetradecanoyl-CoA), the monounsaturated fatty acids (MUFAs) produced are further used as substrates to synthesize polyunsaturated fatty acids (PUFAs) by several other desaturases and elongases. Unlike plants, Caenorhabditis elegans desaturases seem to use fatty acyl-CoAs as substrates. The protein is Delta(9)-fatty-acid desaturase fat-5 (fat-5) of Caenorhabditis elegans.